We begin with the raw amino-acid sequence, 452 residues long: tRNA modification GTPase MnmE (452 aa).

(6S)-5-formyl-5,6,7,8-tetrahydrofolate contacts are provided by Arg25, Glu81, and Lys120. Residues 216–375 (GITVVIAGEP…LKNHLKNTAG (160 aa)) enclose the TrmE-type G domain. Residue Asn226 coordinates K(+). Residues 226–231 (NVGKSS), 245–251 (TDIAGTT), and 270–273 (DTAG) contribute to the GTP site. Mg(2+) is bound at residue Ser230. 3 residues coordinate K(+): Thr245, Ile247, and Thr250. Residue Thr251 coordinates Mg(2+). Lys452 serves as a coordination point for (6S)-5-formyl-5,6,7,8-tetrahydrofolate.

The protein belongs to the TRAFAC class TrmE-Era-EngA-EngB-Septin-like GTPase superfamily. TrmE GTPase family. Homodimer. Heterotetramer of two MnmE and two MnmG subunits. Requires K(+) as cofactor.

The protein localises to the cytoplasm. Its function is as follows. Exhibits a very high intrinsic GTPase hydrolysis rate. Involved in the addition of a carboxymethylaminomethyl (cmnm) group at the wobble position (U34) of certain tRNAs, forming tRNA-cmnm(5)s(2)U34. The sequence is that of tRNA modification GTPase MnmE from Coxiella burnetii (strain Dugway 5J108-111).